We begin with the raw amino-acid sequence, 794 residues long: Zinc finger protein 148 (794 aa).

Lys6 participates in a covalent cross-link: Glycyl lysine isopeptide (Lys-Gly) (interchain with G-Cter in SUMO2). Position 51 is a phosphoserine (Ser51). Residues Lys88, Lys115, and Lys132 each participate in a glycyl lysine isopeptide (Lys-Gly) (interchain with G-Cter in SUMO2) cross-link. The segment at 171–193 adopts a C2H2-type 1 zinc-finger fold; it reads HVCEHCNAAFRTNYHLQRHVFIH. The residue at position 194 (Thr194) is a Phosphothreonine. 2 C2H2-type zinc fingers span residues 199–221 and 227–249; these read FQCSQCDMRFIQKYLLQRHEKIH and FRCDECGMRFIQKYHMERHKRTH. A Phosphoserine modification is found at Ser250. Residues 255 to 278 form a C2H2-type 4 zinc finger; that stretch reads YQCEYCLQYFSRTDRVLKHKRMCH. Lys291 is covalently cross-linked (Glycyl lysine isopeptide (Lys-Gly) (interchain with G-Cter in SUMO2)). Residues 298–338 are disordered; sequence EEDSGFSTSPKDNSLPKKKRQKTEKKSSGMDKESSLDKSDL. Residues Ser301 and Ser306 each carry the phosphoserine modification. A Glycyl lysine isopeptide (Lys-Gly) (interchain with G-Cter in SUMO2) cross-link involves residue Lys308. Positions 321 to 338 are enriched in basic and acidic residues; sequence EKKSSGMDKESSLDKSDL. A Glycyl lysine isopeptide (Lys-Gly) (interchain with G-Cter in SUMO1); alternate cross-link involves residue Lys356. Lys356 participates in a covalent cross-link: Glycyl lysine isopeptide (Lys-Gly) (interchain with G-Cter in SUMO2); alternate. Lys402 is covalently cross-linked (Glycyl lysine isopeptide (Lys-Gly) (interchain with G-Cter in SUMO2)). A Phosphoserine modification is found at Ser412. Residues Lys421 and Lys424 each participate in a glycyl lysine isopeptide (Lys-Gly) (interchain with G-Cter in SUMO2) cross-link. Residues 575-588 are compositionally biased toward polar residues; the sequence is SSEVPEVTQSENVG. A disordered region spans residues 575-596; that stretch reads SSEVPEVTQSENVGSSSQASSS. Lys607 bears the N6-acetyllysine mark. Phosphoserine occurs at positions 665 and 784. The tract at residues 775-794 is disordered; it reads NDNRAGMTSSPDATTGQTFG.

Belongs to the krueppel C2H2-type zinc-finger protein family. Interacts with HNRNPDL. Interacts with the 5FMC complex; the interaction requires association with CHTOP. Interacts with CAVIN1. Post-translationally, sumoylated with SUMO2. Desumoylated by SENP3, resulting in the stimulation of transcription of its target genes.

Its subcellular location is the nucleus. Its function is as follows. Involved in transcriptional regulation. Represses the transcription of a number of genes including gastrin, stromelysin and enolase. Binds to the G-rich box in the enhancer region of these genes. The chain is Zinc finger protein 148 (ZNF148) from Bos taurus (Bovine).